Reading from the N-terminus, the 398-residue chain is G2/mitotic-specific cyclin-B2 (398 aa).

Disordered regions lie at residues 1-26 (MALL…KPKS) and 53-76 (AQNT…KPTA). Threonine 8 carries the phosphothreonine modification. Over residues 8–23 (TVSTDLENNDTGVNSK) the composition is skewed to polar residues. The segment covering 55–69 (NTKVPVPPTKTTNVN) has biased composition (low complexity). Serine 77 and serine 92 each carry phosphoserine. Residue threonine 94 is modified to Phosphothreonine. Residues serine 99, serine 392, and serine 398 each carry the phosphoserine modification.

This sequence belongs to the cyclin family. Cyclin AB subfamily. Interacts with the CDK1 protein kinase to form a serine/threonine kinase holoenzyme complex also known as maturation promoting factor (MPF). The cyclin subunit imparts substrate specificity to the complex.

Essential for the control of the cell cycle at the G2/M (mitosis) transition. The protein is G2/mitotic-specific cyclin-B2 (CCNB2) of Bos taurus (Bovine).